The primary structure comprises 274 residues: MAASRLALLLLVLAVAAARHALPAAGSDAHPGYDGAEDTCGVPAAAAAAGRMEEYGGGRILDITHAYRADLPAFAPGAVTGPVVRLRDSMANGTLYNLSELKMECHMGTHVDAPGHMNQGHFAAGLDVDKLDLDLLNGPTLLVDTPRNTNITAKAMESLNIPKGVRRVLFRTLNTDRKLMWKKGGDLSYVGFTEDGAQWLVDNTDIKLVGIDYLSVAAYDHLITAHVVFFKFPNIILVEGLKLDDVKAGIYMLHCLPLRLVGSEGSPIRCILIK.

An N-terminal signal peptide occupies residues 1-18; the sequence is MAASRLALLLLVLAVAAA.

Belongs to the Cyclase 1 superfamily. Highly expressed in leaf sheaths. Expressed in leaf collars.

The protein localises to the secreted. It localises to the extracellular space. The protein resides in the extracellular matrix. In terms of biological role, may be involved in response to stresses. This Oryza sativa subsp. japonica (Rice) protein is Cyclase-like protein 1.